The sequence spans 270 residues: WGALGHATVAYVAQHYVSPEAASWAQGILGSSSSSYLASIASWADEYRLTSAGKWSASLHFIDAEDNPPTNCNVDYERDCGSSGCSISAIANYTQRVSDSSLSSENHAEALRFLVHFIGDMTQPLHDEAYAVGGNKINVTFDGYHDNLHSDWDTYMPQKLIGGHALSDAESWAKTLVQNIESGNYTAQAIGWIKGDNISEPITTATRWASDANALVCTVVMPHGAAALQTGDLYPTYYDSVIDTIELQIAKGGYRLANWINEIHGSEIAK.

Residues Trp1, His6, His15, Asp45, and His60 each contribute to the a divalent metal cation site. Residue 1–6 (WGALGH) coordinates substrate. Substrate contacts are provided by residues 45-51 (DEYRLTS), 60-63 (HFID), and 73-78 (NVDYER). Disulfide bonds link Cys72–Cys217 and Cys80–Cys85. An N-linked (GlcNAc...) asparagine glycan is attached at Asn92. 3 residues coordinate a divalent metal cation: His116, Asp120, and His126. Residues 116–164 (HFIGDMTQPLHDEAYAVGGNKINVTFDGYHDNLHSDWDTYMPQKLIGGH) are substrate binding. Asn138 carries an N-linked (GlcNAc...) asparagine glycan. 2 residues coordinate a divalent metal cation: His149 and Asp153. 2 N-linked (GlcNAc...) asparagine glycosylation sites follow: Asn184 and Asn197.

Belongs to the nuclease type I family. Zn(2+) is required as a cofactor.

The protein localises to the secreted. The catalysed reaction is Endonucleolytic cleavage to 5'-phosphomononucleotide and 5'-phosphooligonucleotide end-products.. Hydrolyzes only single-stranded DNA and RNA without apparent specificity for bases. This is Nuclease P1 from Penicillium citrinum.